The sequence spans 1227 residues: MELHVQLKHSTDCFVSLPPKIVHSLLLLSEKQSKSLGTLGLEITWYDKINKKENKGYVGWAGGSTDPRFTDSIEMSQEMAQCLGGIKNEQKLKLKALNNIELAHSVQVEPLTSDDWEIMEVHQQYLEEQLLNQVNILYSGQIVPIWIHHKTIIKLKVTETLPTPVVKLSSNSEIIVAPKPRNLPTTTTSSQQQQISKETLKPRFLQIKDFKIDYNNNNTFINEIYINKELLNQFQWNIGDIIEISKVSKNNNKNNKKEKNNNGGDEEEDDDDNEEFDDDDDDDNNNNEDDTSKLQKQLDNKNNNNKKNKKNNKTIYARVFINDKSNNQQVLIHRNIRTIGNFYINTIVRLKYTTSHSLPICPIGSILVKQVIWKQNSLSNLIKQQSSQKIYSVEQIKEQIKVWSNNNLSNNQRYPLLNGSIVSINSNLDLSFNFNNLTSSIIPPTSSSSSSPSNNLDSQRSNNNNNNINNDQLNDITNNMNNPYLSSIQQIGDIMSNLNTNNNQNNQNNNSNKLMNQFQMNNGIFMLSLEILSNDKLLKIESGGNNSIEKKKSLEDYNEIGDRLFQRIGGMEKQIKQAKEFLSLYMYKDLSVIREQLNTPGVNGMIIAGSHGSGKSLLATSLGGYYSTDSRSNAFIIKLDCNQLKELKVENIRKQFNKLFYKSCKESGNTLSATTSTNTTPPPIIIILESLDLILGTPNDQDPGSKIRCEQLVSHIKSLCFKYQNRSSPIVMIATVISSQSLCQSIQIPELFGLTIELQAPTREERVEILERYLKYQGKQLKDQQSLNLMKFSASMEGYLGCDVEQIVDRSIHLSSIKEIENNNNNNDDNDDDNIIEFSIIEKAKEGYTPITLKGIKLHSSEIKWQDIGGLDSVRAMLKETIEWPTKYPKLFQSSPLRLRSGILLYGPTGCGKTLLASAIAGECGLNFISVKGPELLNKYIGSSEQGVRDVFSRASSAKPCVLFFDEFDSIAPRRGHDNSGVTDRVVNQFLTQLDGVEGLTGVYVLAATSRPDLIDPALLRPGRLDKSLYCNIPEFNERLDILTCLKSKMNLSPSISLEQLSTNTQYYTGADLRALMYNAQLKSIHEWMNHLEEEKKRKRKEKEDQSNKNSSQQQDDFIIFQPKNNDNSISKSNLTFEEKTNLQKQIDTIKSQFINSNTSTLNKSNLSNEQPPLITQSHIDLALKESSPSISESERKKYERIYNNFLKERGSVTGNKKEGVPKQTLA.

Disordered stretches follow at residues 251 to 311 (NNKN…NKKN) and 443 to 480 (PPTS…TNNM). Residues 264–289 (GDEEEDDDDNEEFDDDDDDDNNNNED) show a composition bias toward acidic residues. 2 coiled-coil regions span residues 282-315 (DDNN…NKTI) and 454-519 (NNLD…NQFQ). Residues 290-299 (DTSKLQKQLD) are compositionally biased toward basic and acidic residues. Residues 609–616 (GSHGSGKS) and 907–914 (GPTGCGKT) each bind ATP. A compositionally biased stretch (basic and acidic residues) spans 1096–1107 (KKRKRKEKEDQS). The disordered stretch occupies residues 1096-1132 (KKRKRKEKEDQSNKNSSQQQDDFIIFQPKNNDNSISK). A compositionally biased stretch (low complexity) spans 1108-1117 (NKNSSQQQDD). Positions 1123-1132 (PKNNDNSISK) are enriched in polar residues.

It belongs to the AAA ATPase family. Interacts with PEX6; forming the PEX1-PEX6 AAA ATPase complex, which is composed of a heterohexamer formed by a trimer of PEX1-PEX6 dimers.

The protein localises to the cytoplasm. It is found in the cytosol. It localises to the peroxisome membrane. The catalysed reaction is ATP + H2O = ADP + phosphate + H(+). Component of the PEX1-PEX6 AAA ATPase complex, a protein dislocase complex that mediates the ATP-dependent extraction of the PEX5 receptor from peroxisomal membranes, an essential step for PEX5 recycling. Specifically recognizes PEX5 monoubiquitinated at 'Cys-11', and pulls it out of the peroxisome lumen through the PEX2-PEX10-PEX12 retrotranslocation channel. Extraction by the PEX1-PEX6 AAA ATPase complex is accompanied by unfolding of the TPR repeats and release of bound cargo from PEX5. In Dictyostelium discoideum (Social amoeba), this protein is Peroxisomal ATPase PEX1 (pex1).